We begin with the raw amino-acid sequence, 334 residues long: Ornithine carbamoyltransferase (334 aa).

Carbamoyl phosphate is bound by residues 57–60 (STRT), Q84, R108, and 135–138 (HPTQ). L-ornithine contacts are provided by residues N169, D233, and 237 to 238 (SM). Carbamoyl phosphate contacts are provided by residues 275-276 (CL) and R320.

This sequence belongs to the aspartate/ornithine carbamoyltransferase superfamily. OTCase family. As to quaternary structure, homotrimer.

It is found in the cytoplasm. It catalyses the reaction carbamoyl phosphate + L-ornithine = L-citrulline + phosphate + H(+). It functions in the pathway amino-acid biosynthesis; L-arginine biosynthesis; L-arginine from L-ornithine and carbamoyl phosphate: step 1/3. Its function is as follows. Reversibly catalyzes the transfer of the carbamoyl group from carbamoyl phosphate (CP) to the N(epsilon) atom of ornithine (ORN) to produce L-citrulline. The protein is Ornithine carbamoyltransferase of Vibrio vulnificus (strain CMCP6).